A 122-amino-acid polypeptide reads, in one-letter code: Large ribosomal subunit protein uL29B (122 aa).

A coiled-coil region spans residues 10–69 (QLGIKQIEERAAEIKAELAALRQKKNSGDVGANDIKTAKKNLARALTVRREKILEELVEA).

The protein belongs to the universal ribosomal protein uL29 family. As to quaternary structure, component of the large ribosomal subunit.

It is found in the cytoplasm. This is Large ribosomal subunit protein uL29B (RPL35C) from Encephalitozoon cuniculi (strain GB-M1) (Microsporidian parasite).